We begin with the raw amino-acid sequence, 689 residues long: Translation initiation factor IF-2 (689 aa).

Residues 70–107 form a disordered region; it reads VRSKKNSNKKKKKGKGNQDKRQENFAGKQQAQTVETPD. Residues 71-84 show a composition bias toward basic residues; sequence RSKKNSNKKKKKGK. The tr-type G domain maps to 191 to 360; the sequence is ERPAVVTIMG…LLVSEVEEYK (170 aa). Residues 200–207 form a G1 region; the sequence is GHVDHGKT. 200-207 lines the GTP pocket; sequence GHVDHGKT. The interval 225–229 is G2; sequence GITQH. Residues 246–249 form a G3 region; sequence DTPG. GTP contacts are provided by residues 246-250 and 300-303; these read DTPGH and NKMD. Residues 300–303 are G4; the sequence is NKMD. A G5 region spans residues 336 to 338; sequence SAI.

Belongs to the TRAFAC class translation factor GTPase superfamily. Classic translation factor GTPase family. IF-2 subfamily.

Its subcellular location is the cytoplasm. One of the essential components for the initiation of protein synthesis. Protects formylmethionyl-tRNA from spontaneous hydrolysis and promotes its binding to the 30S ribosomal subunits. Also involved in the hydrolysis of GTP during the formation of the 70S ribosomal complex. In Bacillus cytotoxicus (strain DSM 22905 / CIP 110041 / 391-98 / NVH 391-98), this protein is Translation initiation factor IF-2.